The following is a 447-amino-acid chain: Beclin-2 (447 aa).

The stretch at 169-228 (EALHAELCAELSSLEQEEARLTQELEDLDGHHARVAAELRAAQAESKELYKQHEQHRVEY) forms a coiled coil. The required for homodimer formation stretch occupies residues 186 to 256 (EARLTQELED…NQLTYALSQQ (71 aa)).

Belongs to the beclin family. As to quaternary structure, homodimer (via coiled-coil domain). Interacts (via coiled-coil domain) with ATG14 (via coiled-coil domain); this interaction is tighter than BECN2 self-association. Interacts with AMBRA1, UVRAG and PIK3C3/VPS34; these interactions are not disrupted by starvation. Does not interact with RUBCN. Interacts (via N-terminus) with GPRASP1/GASP1; the interaction is direct. In terms of tissue distribution, expressed in brain, skeletal muscle, placenta, thymus and uterus. Expressed at a lower level in liver, testis, stomach, and 17-day-old embryos.

The protein localises to the cytoplasm. Its function is as follows. Involved in 2 distinct lysosomal degradation pathways: acts as a regulator of autophagy and as a regulator of G-protein coupled receptors turnover. Regulates degradation in lysosomes of a variety of G-protein coupled receptors via its interaction with GPRASP1/GASP1. This chain is Beclin-2, found in Mus musculus (Mouse).